The primary structure comprises 110 residues: Methionine-R-sulfoxide reductase B1-A (110 aa).

In terms of domain architecture, MsrB spans Met-1–Lys-104. Zn(2+) is bound by residues Cys-23, Cys-26, Cys-69, and Cys-72. Residue Sec-93 is the Nucleophile of the active site. Sec-93 is a non-standard amino acid (selenocysteine).

Belongs to the MsrB Met sulfoxide reductase family. Requires Zn(2+) as cofactor. As to expression, in the embryo, expressed in the polster, paraxial mesoderm, tectum, otic vesicle and liver.

The protein localises to the cytoplasm. It localises to the nucleus. It is found in the cytoskeleton. It carries out the reaction L-methionyl-[protein] + [thioredoxin]-disulfide + H2O = L-methionyl-(R)-S-oxide-[protein] + [thioredoxin]-dithiol. It catalyses the reaction [thioredoxin]-disulfide + L-methionine + H2O = L-methionine (R)-S-oxide + [thioredoxin]-dithiol. Methionine-sulfoxide reductase that specifically reduces methionine (R)-sulfoxide back to methionine. While in many cases, methionine oxidation is the result of random oxidation following oxidative stress, methionine oxidation is also a post-translational modification that takes place on specific residue. Acts as a regulator of actin assembly by reducing methionine (R)-sulfoxide mediated by MICALs (mical1, mical2 or mical3) on actin, thereby promoting filament repolymerization. Plays a role in innate immunity by reducing oxidized actin, leading to actin repolymerization in macrophages. The sequence is that of Methionine-R-sulfoxide reductase B1-A (msrb1) from Danio rerio (Zebrafish).